The sequence spans 699 residues: Lutropin-choriogonadotropic hormone receptor (699 aa).

An N-terminal signal peptide occupies residues 1-26 (MKQRFSALQLLKLLLLLQPPLPRALR). An LRRNT domain is found at 27 to 66 (EALCPEPCNCVPDGALRCPGPTAGLTRLSLAYLPVKVIPS). Topologically, residues 27–363 (EALCPEPCNC…EDIMGYDFLR (337 aa)) are extracellular. 3 LRR repeats span residues 96-115 (NLLN…RYIE), 124-145 (RLKY…TKVF), and 149-171 (SNFI…AFQG). Asparagine 99 carries an N-linked (GlcNAc...) asparagine glycan. Residues asparagine 174 and asparagine 195 are each glycosylated (N-linked (GlcNAc...) asparagine). LRR repeat units follow at residues 175–196 (ESVT…AFNG), 198–220 (TLTS…AFRG), and 223–244 (GPKT…GLES). Residues asparagine 291, asparagine 299, and asparagine 313 are each glycosylated (N-linked (GlcNAc...) asparagine). At tyrosine 331 the chain carries Sulfotyrosine. A helical transmembrane segment spans residues 364-385 (VLIWLINILAIMGNMTVLFVLL). Topologically, residues 386–395 (TSRYKLTVPR) are cytoplasmic. Residues 396–416 (FLMCNLSFADFCMGLYLLLIA) traverse the membrane as a helical segment. At 417–439 (SVDSQTKGQYYNHAIDWQTGSGC) the chain is on the extracellular side. An intrachain disulfide couples cysteine 439 to cysteine 514. Residues 440–462 (STAGFFTVFASELSVYTLTVITL) traverse the membrane as a helical segment. At 463–482 (ERWHTITYAIHLDQKLRLRH) the chain is on the cytoplasmic side. A helical transmembrane segment spans residues 483–505 (AILIMLGGWLFSSLIAMLPLVGV). At 506–525 (SNYMKVSICFPMDVETTLSQ) the chain is on the extracellular side. A helical membrane pass occupies residues 526 to 549 (VYILTILILNVVAFFIICACYIKI). The Cytoplasmic portion of the chain corresponds to 550-570 (YFAVRNPELMATNKDTKIAKK). The helical transmembrane segment at 571–594 (MAILIFTDFTCMAPISFFAISAAF) threads the bilayer. Over 595-605 (KVPLITVTNSK) the chain is Extracellular. Residues 606–627 (VLLVLFYPINSCANPFLYAIFT) form a helical membrane-spanning segment. The Cytoplasmic segment spans residues 628–699 (KTFQRDFFLL…LLDKTRYTEC (72 aa)). Residues cysteine 643 and cysteine 644 are each lipidated (S-palmitoyl cysteine).

It belongs to the G-protein coupled receptor 1 family. FSH/LSH/TSH subfamily. In terms of processing, sulfated. Gonadal and thyroid cells.

It is found in the cell membrane. Receptor for lutropin-choriogonadotropic hormone. The activity of this receptor is mediated by G proteins which activate adenylate cyclase. The sequence is that of Lutropin-choriogonadotropic hormone receptor (LHCGR) from Homo sapiens (Human).